Consider the following 433-residue polypeptide: Histidinol dehydrogenase (433 aa).

3 residues coordinate NAD(+): Y129, Q191, and N214. Positions 237, 259, and 262 each coordinate substrate. Residues Q259 and H262 each contribute to the Zn(2+) site. Catalysis depends on proton acceptor residues E326 and H327. Substrate is bound by residues H327, D360, E414, and H419. Zn(2+) is bound at residue D360. H419 serves as a coordination point for Zn(2+).

This sequence belongs to the histidinol dehydrogenase family. Requires Zn(2+) as cofactor.

The enzyme catalyses L-histidinol + 2 NAD(+) + H2O = L-histidine + 2 NADH + 3 H(+). Its pathway is amino-acid biosynthesis; L-histidine biosynthesis; L-histidine from 5-phospho-alpha-D-ribose 1-diphosphate: step 9/9. Its function is as follows. Catalyzes the sequential NAD-dependent oxidations of L-histidinol to L-histidinaldehyde and then to L-histidine. The chain is Histidinol dehydrogenase from Methanosarcina mazei (strain ATCC BAA-159 / DSM 3647 / Goe1 / Go1 / JCM 11833 / OCM 88) (Methanosarcina frisia).